A 247-amino-acid polypeptide reads, in one-letter code: RNA-free ribonuclease P (247 aa).

The segment at 223–247 (SPEGEKEKGEADKKKKSHSEEAEFI) is disordered.

Belongs to the HARP family.

It carries out the reaction Endonucleolytic cleavage of RNA, removing 5'-extranucleotides from tRNA precursor.. RNA-free RNase P that catalyzes the removal of the 5'-leader sequence from pre-tRNA to produce the mature 5'-terminus. The sequence is that of RNA-free ribonuclease P from Methanosarcina acetivorans (strain ATCC 35395 / DSM 2834 / JCM 12185 / C2A).